The sequence spans 22 residues: leu leader peptide (22 aa).

Residues 1–22 (MLHHMTSRANLLLLRRGGSQRS) are disordered. The segment covering 11–22 (LLLLRRGGSQRS) has biased composition (low complexity).

Its function is as follows. Involved in control of the biosynthesis of leucine. This Corynebacterium glutamicum (strain ATCC 13032 / DSM 20300 / JCM 1318 / BCRC 11384 / CCUG 27702 / LMG 3730 / NBRC 12168 / NCIMB 10025 / NRRL B-2784 / 534) protein is leu leader peptide (leuL).